Here is a 77-residue protein sequence, read N- to C-terminus: NAD(P)H-quinone oxidoreductase subunit L (77 aa).

2 helical membrane-spanning segments follow: residues 12-32 (LIAY…LLFY) and 47-67 (LGIY…SPFL).

Belongs to the complex I NdhL subunit family. NDH-1 can be composed of about 15 different subunits; different subcomplexes with different compositions have been identified which probably have different functions.

The protein resides in the cellular thylakoid membrane. The enzyme catalyses a plastoquinone + NADH + (n+1) H(+)(in) = a plastoquinol + NAD(+) + n H(+)(out). The catalysed reaction is a plastoquinone + NADPH + (n+1) H(+)(in) = a plastoquinol + NADP(+) + n H(+)(out). Functionally, NDH-1 shuttles electrons from an unknown electron donor, via FMN and iron-sulfur (Fe-S) centers, to quinones in the respiratory and/or the photosynthetic chain. The immediate electron acceptor for the enzyme in this species is believed to be plastoquinone. Couples the redox reaction to proton translocation, and thus conserves the redox energy in a proton gradient. Cyanobacterial NDH-1 also plays a role in inorganic carbon-concentration. The protein is NAD(P)H-quinone oxidoreductase subunit L of Prochlorococcus marinus (strain AS9601).